A 129-amino-acid polypeptide reads, in one-letter code: Virion-associated protein (129 aa).

2 coiled-coil regions span residues 1–31 (MANL…ILEL) and 38–59 (IKES…LIND). A capsid binding region spans residues 122-129 (PAGWPNQY).

Belongs to the caulimovirus ORF III family. As to quaternary structure, homotetramer, through coiled-coil domain. Homotrimer when interacts with icosehadral capsid. Interacts with capsid protein, and with Movement protein.

The protein localises to the virion. Its subcellular location is the host cell junction. It is found in the host plasmodesma. Plays a role in virus cell-to-cell and plant-to-plant transmission. Interacts with virion icosahedral capsid and movement protein, thereby facilitating virion cell-to-cell transmission through plasmodesmata opened by viral movement protein. Also interacts with aphid transmission factor, attaching the virion to aphid stylet when the animal feeds on an virus infected plant. Aphid saliva may later detach the virion, inducing release of infectious particles when the animal feeds on a new plant. This Cauliflower mosaic virus (strain D/H) (CaMV) protein is Virion-associated protein.